The primary structure comprises 491 residues: NADH-quinone oxidoreductase subunit N 1 (491 aa).

14 helical membrane passes run 15-35, 41-61, 77-97, 105-125, 130-150, 165-185, 211-231, 247-269, 279-299, 307-327, 333-353, 378-398, 416-436, and 459-479; these read VLGMPAFLMIWAMLVLIVDMF, VLLTLSLIGLGVTAALGALDY, FGVLVNWILLAGTALTLLIAF, LSQGEFYPLVLFATSGMLFLV, LVTIFIGVETLSIALYVLTGF, LLLGGFAAGFLVYGIALIYGM, PILLAGVGFVLIALGFKVSMF, PVTAYMSVATKGAAFAAMLRFLN, WQLLFGLFAAATMAYGNIVAV, MLAYSSIAHAGYMLLGVLAAS, AFTVYLLAYTLTNLGAFAVLI, LALAMTVFMFSLAGVPPTAGF, LAIIGVVTSVISAFFYLRVIV, and LGVIVAVIGIIAVGILPNIFT.

The protein belongs to the complex I subunit 2 family. NDH-1 is composed of 14 different subunits. Subunits NuoA, H, J, K, L, M, N constitute the membrane sector of the complex.

The protein resides in the cell membrane. The catalysed reaction is a quinone + NADH + 5 H(+)(in) = a quinol + NAD(+) + 4 H(+)(out). In terms of biological role, NDH-1 shuttles electrons from NADH, via FMN and iron-sulfur (Fe-S) centers, to quinones in the respiratory chain. The immediate electron acceptor for the enzyme in this species is believed to be ubiquinone. Couples the redox reaction to proton translocation (for every two electrons transferred, four hydrogen ions are translocated across the cytoplasmic membrane), and thus conserves the redox energy in a proton gradient. This is NADH-quinone oxidoreductase subunit N 1 from Herpetosiphon aurantiacus (strain ATCC 23779 / DSM 785 / 114-95).